The primary structure comprises 313 residues: Protein FixB (313 aa).

255 to 283 serves as a coordination point for FAD; it reads LYLAVGISGQIQHMVGANGAQTIFAINKD.

It belongs to the ETF alpha-subunit/FixB family. As to quaternary structure, heterodimer of FixA and FixB.

The protein operates within amine and polyamine metabolism; carnitine metabolism. Functionally, required for anaerobic carnitine reduction. May bring reductant to CaiA. This Salmonella agona (strain SL483) protein is Protein FixB.